Reading from the N-terminus, the 359-residue chain is Molybdenum import ATP-binding protein ModC (359 aa).

An ABC transporter domain is found at 1–229; sequence MLELNFSQQL…SALRPWLQRE (229 aa). 31–38 contacts ATP; that stretch reads GLSGAGKT. The Mop domain occupies 289–354; the sequence is SSSIRNILPV…IKSVSFNRQN (66 aa).

This sequence belongs to the ABC transporter superfamily. Molybdate importer (TC 3.A.1.8) family. The complex is composed of two ATP-binding proteins (ModC), two transmembrane proteins (ModB) and a solute-binding protein (ModA).

Its subcellular location is the cell inner membrane. It catalyses the reaction molybdate(out) + ATP + H2O = molybdate(in) + ADP + phosphate + H(+). Its function is as follows. Part of the ABC transporter complex ModABC involved in molybdenum import. Responsible for energy coupling to the transport system. This chain is Molybdenum import ATP-binding protein ModC, found in Yersinia pestis bv. Antiqua (strain Antiqua).